Reading from the N-terminus, the 224-residue chain is Large ribosomal subunit protein bL25 (224 aa).

The segment at 190-224 is disordered; that stretch reads EPAPAAEGAAPAEGAAAAAAGGKPAAKTAKPAAKK.

This sequence belongs to the bacterial ribosomal protein bL25 family. CTC subfamily. In terms of assembly, part of the 50S ribosomal subunit; part of the 5S rRNA/L5/L18/L25 subcomplex. Contacts the 5S rRNA. Binds to the 5S rRNA independently of L5 and L18.

Its function is as follows. This is one of the proteins that binds to the 5S RNA in the ribosome where it forms part of the central protuberance. The polypeptide is Large ribosomal subunit protein bL25 (Variovorax paradoxus (strain S110)).